The primary structure comprises 136 residues: Transcription antitermination protein NusB (136 aa).

Belongs to the NusB family.

Its function is as follows. Involved in transcription antitermination. Required for transcription of ribosomal RNA (rRNA) genes. Binds specifically to the boxA antiterminator sequence of the ribosomal RNA (rrn) operons. This Kineococcus radiotolerans (strain ATCC BAA-149 / DSM 14245 / SRS30216) protein is Transcription antitermination protein NusB.